An 819-amino-acid polypeptide reads, in one-letter code: Metabotropic glutamate receptor-like protein O (819 aa).

The signal sequence occupies residues 1-19 (MKKVFFLILILNCVVGALS). The Extracellular segment spans residues 20 to 394 (NKNICKISLL…FVDSYSNSIK (375 aa)). 6 N-linked (GlcNAc...) asparagine glycosylation sites follow: Asn-99, Asn-185, Asn-277, Asn-295, Asn-330, and Asn-370. A helical transmembrane segment spans residues 395–415 (ISILSVSIFCIFICVLGMIFI). Over 416 to 428 (TVLRNARILKSSS) the chain is Cytoplasmic. A helical membrane pass occupies residues 429 to 449 (PSFLLLILFGCIVIFTGCILF). Topologically, residues 450 to 457 (SQPATDKT) are extracellular. Residues 458–478 (CQGRVWLLSIGYTIFLGSLLI) form a helical membrane-spanning segment. Over 479–503 (KNWRVWLLFDNKKLRKRSITNWKLY) the chain is Cytoplasmic. Residues 504 to 524 (PWVAGILVVDVLILALWQGLG) traverse the membrane as a helical segment. At 525 to 550 (DIKSESRIIGTSFYQYTNVCTNNDQG) the chain is on the extracellular side. Residues 551 to 571 (SIALYILLAFHGLKLLGTCFI) form a helical membrane-spanning segment. Residues 572 to 587 (SFKIKLVDIEEFNESK) lie on the Cytoplasmic side of the membrane. The helical transmembrane segment at 588 to 608 (PITTSVFIILFCIFTIILLIA) threads the bilayer. Residues 609–624 (PSSSSSSASSPQPIAS) lie on the Extracellular side of the membrane. The chain crosses the membrane as a helical span at residues 625–645 (LETIICICSVTTTAISIGLLF). Residues 646-819 (GDKIYFITTQ…NNENEIISDT (174 aa)) lie on the Cytoplasmic side of the membrane. The disordered stretch occupies residues 674–819 (KDCDDDDDDS…NNENEIISDT (146 aa)). Basic residues predominate over residues 695–712 (NKNKNKNRNQSEKKKRPN). The segment covering 726–739 (ESVVFNPPSNNDLT) has biased composition (polar residues). A compositionally biased stretch (basic and acidic residues) spans 748-768 (GIKEGHGHDSENNDEYEHHED). Residues 769 to 798 (EDHEYEGEGEDEDHEDEYEVENDIEQEQEQ) are compositionally biased toward acidic residues. Positions 799–808 (ESSNISISTK) are enriched in low complexity.

This sequence in the N-terminal section; belongs to the BMP lipoprotein family. The protein in the C-terminal section; belongs to the G-protein coupled receptor 3 family. GABA-B receptor subfamily.

Its subcellular location is the membrane. The protein is Metabotropic glutamate receptor-like protein O (grlO) of Dictyostelium discoideum (Social amoeba).